The sequence spans 1293 residues: Enterobactin synthase component F (1293 aa).

The interval 1-301 (MSQHLPLVAA…NVLPLGIHIA (301 aa)) is elongation/condensation. The interval 482 to 887 (SYREMREQVV…ALPDVEQAVT (406 aa)) is adenylation. A Carrier domain is found at 971 to 1046 (APKAGSETII…KLATIIDGEE (76 aa)). O-(pantetheine 4'-phosphoryl)serine is present on serine 1006. The tract at residues 1066–1293 (PTLFCFHPAS…GPIIRATLNR (228 aa)) is thioesterase. The active-site Proton acceptor; for thioesterase activity is the histidine 1271.

Belongs to the ATP-dependent AMP-binding enzyme family. EntF subfamily. As to quaternary structure, proteins EntB, EntD, EntE and EntF are the component of the enterobactin synthase. Components probably do not form a stable complex. EntF acts as a catalytic monomer. Requires pantetheine 4'-phosphate as cofactor. In terms of processing, 4'-phosphopantetheine is transferred from CoA to a specific serine of apo-EntF by EntD. Holo-EntF so formed is then acylated with seryl-AMP.

The protein resides in the cytoplasm. The catalysed reaction is 3 2,3-dihydroxybenzoate + 3 L-serine + 6 ATP = enterobactin + 6 AMP + 6 diphosphate + 4 H(+). The enzyme catalyses holo-[peptidyl-carrier protein] + L-serine + ATP = L-seryl-[peptidyl-carrier protein] + AMP + diphosphate. It functions in the pathway siderophore biosynthesis; enterobactin biosynthesis. Involved in the biosynthesis of the siderophore enterobactin (enterochelin), which is a macrocyclic trimeric lactone of N-(2,3-dihydroxybenzoyl)-serine. EntF catalyzes the activation of L-serine via ATP-dependent PPi exchange reaction to form seryladenylate. Activated L-serine is loaded onto the peptidyl carrier domain via a thioester linkage to the phosphopanthetheine moiety, forming seryl-S-Ppant-EntF. EntF acts then as the sole catalyst for the formation of the three amide and three ester linkages found in enterobactin, using seryladenylate and 2,3-dihydroxybenzoate-S-Ppant-EntB (DHB-S-Ppant-EntB) as substrates, via the formation of a DHB-Ser-S-Ppant-EntF intermediate. The polypeptide is Enterobactin synthase component F (entF) (Escherichia coli O157:H7).